The following is a 126-amino-acid chain: uncharacterized protein (126 aa).

This is an uncharacterized protein from Archaeoglobus fulgidus (strain ATCC 49558 / DSM 4304 / JCM 9628 / NBRC 100126 / VC-16).